Reading from the N-terminus, the 118-residue chain is UPF0295 protein GWCH70_0499 (118 aa).

The next 2 membrane-spanning stretches (helical) occupy residues 12 to 32 and 42 to 62; these read IRTF…IGIF and LFMI…FWIG.

The protein belongs to the UPF0295 family.

The protein localises to the cell membrane. This Geobacillus sp. (strain WCH70) protein is UPF0295 protein GWCH70_0499.